The following is a 507-amino-acid chain: O-fucosyltransferase 30 (507 aa).

Residues 26–46 (AIFLCSVSILVVFFIVVFFIT) traverse the membrane as a helical; Signal-anchor for type II membrane protein segment. N-linked (GlcNAc...) asparagine glycans are attached at residues asparagine 110, asparagine 146, asparagine 398, and asparagine 410.

Belongs to the glycosyltransferase GT106 family.

It localises to the membrane. Its pathway is glycan metabolism. This chain is O-fucosyltransferase 30, found in Arabidopsis thaliana (Mouse-ear cress).